Consider the following 516-residue polypeptide: Exodeoxyribonuclease 7 large subunit (516 aa).

This sequence belongs to the XseA family. Heterooligomer composed of large and small subunits.

It localises to the cytoplasm. The catalysed reaction is Exonucleolytic cleavage in either 5'- to 3'- or 3'- to 5'-direction to yield nucleoside 5'-phosphates.. Functionally, bidirectionally degrades single-stranded DNA into large acid-insoluble oligonucleotides, which are then degraded further into small acid-soluble oligonucleotides. This is Exodeoxyribonuclease 7 large subunit from Chlamydia trachomatis serovar L2 (strain ATCC VR-902B / DSM 19102 / 434/Bu).